Consider the following 872-residue polypeptide: Facilitated trehalose transporter Tret1 (872 aa).

4 disordered regions span residues 1–40 (MSGR…LKEK), 53–217 (VESN…KATS), 262–281 (SSSE…RKHQ), and 293–315 (KVLQ…KRLI). Over 1–406 (MSGRDNRGAG…VYRPTTNPIY (406 aa)) the chain is Cytoplasmic. Gly residues predominate over residues 8–22 (GAGGGGGGGGGGSGG). Composition is skewed to low complexity over residues 55-68 (SNLS…SLDT), 84-98 (RHPQ…QQQR), and 121-132 (PPTQQQPQQQHQ). A phosphoserine mark is found at serine 262, serine 263, and serine 264. A phosphoserine mark is found at serine 334 and serine 336. The tract at residues 340–361 (FLTSRQHFQQQRSISTDSRKSR) is disordered. Residues 344–355 (RQHFQQQRSIST) show a composition bias toward polar residues. Residues 407–427 (IWTQVLAALSVSLGSLVVGFV) traverse the membrane as a helical segment. Topologically, residues 428–454 (SAYTSPALITMTNGNITSFEVTPQAAS) are extracellular. N-linked (GlcNAc...) asparagine glycosylation occurs at asparagine 442. The chain crosses the membrane as a helical span at residues 455-475 (WVGGIMPLAGLLGGIAGGPFI). The Cytoplasmic portion of the chain corresponds to 476–488 (EYLGRRNTILTTA). A helical membrane pass occupies residues 489-509 (VPFIVSSLLIACAVNITMVLL). Residues 510–511 (GR) lie on the Extracellular side of the membrane. Residues 512–532 (FLAGFCVGIASLSLPVYLGET) traverse the membrane as a helical segment. Topologically, residues 533 to 538 (VQPEVR) are cytoplasmic. Residues 539–559 (GTLGLLPTAFGNIGILLCFVA) traverse the membrane as a helical segment. Residues 560 to 566 (GTYMDWS) are Extracellular-facing. The chain crosses the membrane as a helical span at residues 567-587 (MLAFLGAALPVPFLILMFLIP). Residues 588–650 (ETPRWYVSRG…ELLKRNNLKP (63 aa)) are Cytoplasmic-facing. The chain crosses the membrane as a helical span at residues 651 to 671 (LSISLGLMFFQQLSGINAVIF). The Extracellular segment spans residues 672–687 (YTVQIFKDAGSTIDGN). The chain crosses the membrane as a helical span at residues 688–708 (VCTIIVGIVNFMATFIGIILI). Over 709-714 (DRAGRK) the chain is Cytoplasmic. Residues 715 to 735 (ILLYVSNVAMIITLFVLGGFF) form a helical membrane-spanning segment. At 736-755 (YCKDKAGIDVSNVGWLPLSC) the chain is on the extracellular side. The helical transmembrane segment at 756–776 (FVVYILGFSLGFGPIPWLMMG) threads the bilayer. At 777 to 784 (EILPAKIR) the chain is on the cytoplasmic side. A helical transmembrane segment spans residues 785–803 (GSAASVATAFNWTCTFVVT). The Extracellular segment spans residues 804–816 (KTFQDMLDVIGSY). Residues 817–837 (GAFWLFGAICFIGLFFVIIYV) traverse the membrane as a helical segment. Over 838-872 (PETQGKTLEDIERKMMGRVRRMSSVANIKPLSFNM) the chain is Cytoplasmic. Serine 860 and serine 861 each carry phosphoserine.

This sequence belongs to the major facilitator superfamily. Sugar transporter (TC 2.A.1.1) family. Trehalose transporter subfamily.

It localises to the cell membrane. In terms of biological role, low-capacity facilitative transporter for trehalose. Does not transport maltose, sucrose or lactose. Mediates the bidirectional transfer of trehalose. Responsible for the transport of trehalose synthesized in the fat body and the incorporation of trehalose into other tissues that require a carbon source, thereby regulating trehalose levels in the hemolymph. This Drosophila willistoni (Fruit fly) protein is Facilitated trehalose transporter Tret1.